A 431-amino-acid polypeptide reads, in one-letter code: Mannan endo-1,4-beta-mannosidase 5 (431 aa).

The signal sequence occupies residues 1 to 24 (MVPTRNRPMLRILGFFICAAFIYL). N-linked (GlcNAc...) asparagine glycosylation occurs at Asn45. Trp97 is a substrate binding site. The N-linked (GlcNAc...) asparagine glycan is linked to Asn168. Asn213 contacts substrate. Glu214 (proton donor) is an active-site residue. N-linked (GlcNAc...) asparagine glycosylation is present at Asn282. Tyr294 is a binding site for substrate. N-linked (GlcNAc...) asparagine glycosylation is present at Asn301. Glu334 functions as the Nucleophile in the catalytic mechanism. Residue Trp376 participates in substrate binding.

The protein belongs to the glycosyl hydrolase 5 (cellulase A) family. As to expression, expressed in stems.

The protein resides in the secreted. The enzyme catalyses Random hydrolysis of (1-&gt;4)-beta-D-mannosidic linkages in mannans, galactomannans and glucomannans.. The sequence is that of Mannan endo-1,4-beta-mannosidase 5 (MAN5) from Arabidopsis thaliana (Mouse-ear cress).